A 382-amino-acid chain; its full sequence is MQLLHISDTHLGKRQYNLESREKDVYDTFTQLIDIAINEHVKAVIHTGDLFDVNNPPNRAKLHAIKELKRLKDHNIPFICIAGDHDSPKRKEEIYPQRILEEFNLIKILQKIDNRVKLENVEVYGISHISNVSVNDLKEQLSKVKPETRKSILMLHQGIRTYLPYQGAWQIELSDLPKGFSLYAVGHLHSRRKDYLDGGALIEIAGSPDIMREEEIEDYQKSKKGATLIDMSGDLPSINYINVNIRDQLVLDINVDKIEQSIESVIQKLKENVKNDKKPILHIELEGTVPIRKDVLMTKLQALRDYVEHYRIYKNNIVSIKEENLKTKLKTTYSSLNDIIADYLKGIGYTDEETKIIIDIINEEDEKKVEELLKKFAGVEDK.

Aspartate 8, histidine 10, aspartate 49, and aspartate 84 together coordinate Mn(2+). Histidine 85 (proton donor) is an active-site residue. Mn(2+)-binding residues include histidine 156, histidine 187, and histidine 189.

It belongs to the MRE11/RAD32 family. As to quaternary structure, homodimer. Forms a heterotetramer composed of two Mre11 subunits and two Rad50 subunits. Interacts with Rad50 and HerA. Mn(2+) serves as cofactor.

Its activity is regulated as follows. Nuclease activity is regulated by Rad50. Functionally, part of the Rad50/Mre11 complex, which is involved in the early steps of DNA double-strand break (DSB) repair. The complex may facilitate opening of the processed DNA ends to aid in the recruitment of HerA and NurA. Mre11 binds to DSB ends and has both double-stranded 3'-5' exonuclease activity and single-stranded endonuclease activity. Recruited immediately to chromosomal DNA after gamma irradiation, and remains DNA bound in the course of DNA repair. The chain is DNA double-strand break repair protein Mre11 from Sulfolobus acidocaldarius (strain ATCC 33909 / DSM 639 / JCM 8929 / NBRC 15157 / NCIMB 11770).